The following is a 320-amino-acid chain: Fructose-1,6-bisphosphatase class 1 (320 aa).

Residues Glu93, Asp114, Leu116, and Asp117 each coordinate Mg(2+). Residues 117–120 (DGSS), Tyr225, and Lys256 each bind substrate. Glu262 serves as a coordination point for Mg(2+).

This sequence belongs to the FBPase class 1 family. Homotetramer. Mg(2+) is required as a cofactor.

It is found in the cytoplasm. It catalyses the reaction beta-D-fructose 1,6-bisphosphate + H2O = beta-D-fructose 6-phosphate + phosphate. It functions in the pathway carbohydrate biosynthesis; gluconeogenesis. This Syntrophotalea carbinolica (strain DSM 2380 / NBRC 103641 / GraBd1) (Pelobacter carbinolicus) protein is Fructose-1,6-bisphosphatase class 1.